We begin with the raw amino-acid sequence, 63 residues long: Large ribosomal subunit protein bL32 (63 aa).

The interval 1-20 is disordered; it reads MANPKAKMSKSRRDKRRAQF. Residues 7-18 show a composition bias toward basic residues; it reads KMSKSRRDKRRA.

It belongs to the bacterial ribosomal protein bL32 family.

In Chlorobaculum parvum (strain DSM 263 / NCIMB 8327) (Chlorobium vibrioforme subsp. thiosulfatophilum), this protein is Large ribosomal subunit protein bL32.